A 275-amino-acid polypeptide reads, in one-letter code: Bis(5'-nucleosyl)-tetraphosphatase, symmetrical (275 aa).

Belongs to the Ap4A hydrolase family.

The enzyme catalyses P(1),P(4)-bis(5'-adenosyl) tetraphosphate + H2O = 2 ADP + 2 H(+). Its function is as follows. Hydrolyzes diadenosine 5',5'''-P1,P4-tetraphosphate to yield ADP. This Haemophilus influenzae (strain PittGG) protein is Bis(5'-nucleosyl)-tetraphosphatase, symmetrical.